We begin with the raw amino-acid sequence, 431 residues long: Histidinol dehydrogenase (431 aa).

NAD(+) contacts are provided by tyrosine 131, glutamine 193, and asparagine 216. Positions 239, 261, and 264 each coordinate substrate. Residues glutamine 261 and histidine 264 each coordinate Zn(2+). Active-site proton acceptor residues include glutamate 329 and histidine 330. Positions 330, 363, 417, and 422 each coordinate substrate. Aspartate 363 is a binding site for Zn(2+). Histidine 422 contacts Zn(2+).

The protein belongs to the histidinol dehydrogenase family. Zn(2+) serves as cofactor.

It carries out the reaction L-histidinol + 2 NAD(+) + H2O = L-histidine + 2 NADH + 3 H(+). It functions in the pathway amino-acid biosynthesis; L-histidine biosynthesis; L-histidine from 5-phospho-alpha-D-ribose 1-diphosphate: step 9/9. Functionally, catalyzes the sequential NAD-dependent oxidations of L-histidinol to L-histidinaldehyde and then to L-histidine. This is Histidinol dehydrogenase from Clostridium acetobutylicum (strain ATCC 824 / DSM 792 / JCM 1419 / IAM 19013 / LMG 5710 / NBRC 13948 / NRRL B-527 / VKM B-1787 / 2291 / W).